The primary structure comprises 171 residues: Putative charged multivesicular body protein 4B-like protein CHMP4BP1 (171 aa).

Basic and acidic residues predominate over residues 1 to 17 (MLSKKQEFLEKKIEQRH). Disordered stretches follow at residues 1-24 (MLSKKQEFLEKKIEQRHGTKNKPA) and 132-171 (EQEEPDKNLLEVSGPETVPLPNVPSIALPSKPAKKRKTTT).

Belongs to the SNF7 family.

This chain is Putative charged multivesicular body protein 4B-like protein CHMP4BP1 (CHMP4BP1), found in Homo sapiens (Human).